The primary structure comprises 142 residues: Large ribosomal subunit protein uL13 (142 aa).

It belongs to the universal ribosomal protein uL13 family. As to quaternary structure, part of the 50S ribosomal subunit.

Functionally, this protein is one of the early assembly proteins of the 50S ribosomal subunit, although it is not seen to bind rRNA by itself. It is important during the early stages of 50S assembly. The polypeptide is Large ribosomal subunit protein uL13 (Paraburkholderia phytofirmans (strain DSM 17436 / LMG 22146 / PsJN) (Burkholderia phytofirmans)).